Here is a 225-residue protein sequence, read N- to C-terminus: Glutathione s-transferase kappa 2 (225 aa).

Residues 15 to 17 (SPY), N52, and 200 to 201 (SD) contribute to the glutathione site.

The protein belongs to the GST superfamily. Kappa family. In terms of tissue distribution, expressed in the pharynx, body wall muscles and epidermis. Weaker expression is seen in the intestine.

The protein resides in the mitochondrion. The enzyme catalyses RX + glutathione = an S-substituted glutathione + a halide anion + H(+). In terms of biological role, has roles in respiratory and lipid metabolism. The chain is Glutathione s-transferase kappa 2 (gstk-2) from Caenorhabditis elegans.